The chain runs to 543 residues: Chaperonin GroEL (543 aa).

Residues 29-32 (TLGP), 86-90 (DGTTT), Gly-413, 478-480 (NAA), and Asp-494 contribute to the ATP site.

It belongs to the chaperonin (HSP60) family. In terms of assembly, forms a cylinder of 14 subunits composed of two heptameric rings stacked back-to-back. Interacts with the co-chaperonin GroES.

Its subcellular location is the cytoplasm. It catalyses the reaction ATP + H2O + a folded polypeptide = ADP + phosphate + an unfolded polypeptide.. In terms of biological role, together with its co-chaperonin GroES, plays an essential role in assisting protein folding. The GroEL-GroES system forms a nano-cage that allows encapsulation of the non-native substrate proteins and provides a physical environment optimized to promote and accelerate protein folding. This chain is Chaperonin GroEL, found in Lactobacillus johnsonii (strain CNCM I-12250 / La1 / NCC 533).